The following is a 305-amino-acid chain: Methionyl-tRNA formyltransferase (305 aa).

110 to 113 (SLLP) is a (6S)-5,6,7,8-tetrahydrofolate binding site.

Belongs to the Fmt family.

The catalysed reaction is L-methionyl-tRNA(fMet) + (6R)-10-formyltetrahydrofolate = N-formyl-L-methionyl-tRNA(fMet) + (6S)-5,6,7,8-tetrahydrofolate + H(+). Attaches a formyl group to the free amino group of methionyl-tRNA(fMet). The formyl group appears to play a dual role in the initiator identity of N-formylmethionyl-tRNA by promoting its recognition by IF2 and preventing the misappropriation of this tRNA by the elongation apparatus. The polypeptide is Methionyl-tRNA formyltransferase (Ureaplasma parvum serovar 3 (strain ATCC 700970)).